The following is a 321-amino-acid chain: Large ribosomal subunit protein uL3 (321 aa).

The protein belongs to the universal ribosomal protein uL3 family. As to quaternary structure, part of the 50S ribosomal subunit. Forms a cluster with proteins L14 and L24e.

One of the primary rRNA binding proteins, it binds directly near the 3'-end of the 23S rRNA, where it nucleates assembly of the 50S subunit. This chain is Large ribosomal subunit protein uL3, found in Nanoarchaeum equitans (strain Kin4-M).